The primary structure comprises 949 residues: Probable transcriptional regulatory protein STB4 (949 aa).

Residues 87–113 (CELCKKRKVKCDGNNPCLNCSKHQKEC) constitute a DNA-binding region (zn(2)-C6 fungal-type). 2 stretches are compositionally biased toward low complexity: residues 164 to 178 (DGVS…NPNS) and 200 to 212 (SGSN…NNNS). Disordered regions lie at residues 164 to 214 (DGVS…NSFP) and 862 to 888 (GERE…ATRS). Positions 862 to 874 (GEREENADERQEN) are enriched in basic and acidic residues.

The protein localises to the nucleus. Functionally, binds to SIN3. This chain is Probable transcriptional regulatory protein STB4 (STB4), found in Saccharomyces cerevisiae (strain ATCC 204508 / S288c) (Baker's yeast).